Here is a 317-residue protein sequence, read N- to C-terminus: Ret finger protein-like 3 (317 aa).

An RING-type zinc finger spans residues 40–82 (CPVCSDYLEKPMSLECGCTVCLKCINSLQKEPHGEDLLCCCCS). Positions 107-301 (EPKLKKILQM…DQGVLSICPL (195 aa)) constitute a B30.2/SPRY domain.

Expressed during neurogenesis in differentiating human embryonic stem cells and in the developing human neocortex.

Its subcellular location is the cytoplasm. It is found in the nucleus. Functionally, (Microbial infection) Stimulates the activity of Human Immunodeficiency Virus 1/HIV-1 pre-integration complex. This Homo sapiens (Human) protein is Ret finger protein-like 3 (RFPL3).